Reading from the N-terminus, the 208-residue chain is High frequency lysogenization protein HflD homolog (208 aa).

This sequence belongs to the HflD family.

It localises to the cytoplasm. The protein resides in the cell inner membrane. The chain is High frequency lysogenization protein HflD homolog from Yersinia pestis bv. Antiqua (strain Nepal516).